Here is a 98-residue protein sequence, read N- to C-terminus: NADH-ubiquinone oxidoreductase chain 4L (98 aa).

A run of 3 helical transmembrane segments spans residues 1-21 (MSLV…GLLM), 29-49 (SLLC…IMIL), and 61-81 (IILL…LVMV).

It belongs to the complex I subunit 4L family. Core subunit of respiratory chain NADH dehydrogenase (Complex I) which is composed of 45 different subunits.

It is found in the mitochondrion inner membrane. The enzyme catalyses a ubiquinone + NADH + 5 H(+)(in) = a ubiquinol + NAD(+) + 4 H(+)(out). In terms of biological role, core subunit of the mitochondrial membrane respiratory chain NADH dehydrogenase (Complex I) which catalyzes electron transfer from NADH through the respiratory chain, using ubiquinone as an electron acceptor. Part of the enzyme membrane arm which is embedded in the lipid bilayer and involved in proton translocation. This is NADH-ubiquinone oxidoreductase chain 4L (MT-ND4L) from Urotrichus talpoides (Japanese shrew mole).